Consider the following 1544-residue polypeptide: MKLYKLNTHTRGCNKSYDADLVMNLKDHPNANVGDVVEIYAPDEENGTHLLLQITEFNGSCGRDVISIESGIANAFKMRPYSNVVMRIVKPADVALDSIEITFKDQYMGRSEMWRLKTYLTDTCVYVNKKIDYNDMQIRCQVYEMWSQGERVASGVITEDTKIVFRSSTSMVYLFLQMSSEMWDFDIHGDLYFEKAVNGFLTELFQKWRKLSCNHEVTIVLFSRTFYAAKSLDEFPEHMRDCLQQDYKGRFYEDFYRVAIQNERCDDWCTVLGQLRKLFTSYQATVLRYHERENMKIPPATNSSATQGNFLEVLNISLNTFEKHYLDRTFDRTGQLSVVITPGVGVFSVDRELTNITKQRIIDNGVGSDLVCVGEQPLHAVPLLKFHNKDTTLTSADDYSLPHWINLSFYSTNKKIVYSSFIPRIKLPLFGSQLTLHDGVGDGEGEENERHFLSCNQSEYKHNSLFDYDAYDEQIFQPLPAQSTCSLQRVVRAKKTSVPSLETYAYRNNDWENLTPTQIPAMRRKMSDPDIHHGTSAMLAALQPDTTNLSESLASEKNSRRTIVSIAPIVRPGRALINPFDPSQVTIKLTSNRRRWTHIFPKGPTGVLIQQHHYQAVPAKPTQAGQQRPLQQTQSNNNNDQEDYGCENGEQYDRVSSHSLLNKSDSSQSFVMGDEPIDFFKRRQNSPMNPQPANVPNLTATQAKSYLWGATGEQEWTPAITTVKHLRPIVEGEHHHLGSLEALRALDPPPDAEAGGGRGKIIIGVDWKSLTIPACLPITTDYFPDKRSLNNDYVISDYTLLPDDVNHDYAQSRAVYRKPLSTEEVCKEIVSQRLAQGFQLIVVDEKPPTASGCSSGSAVQPVKLSRETNKEYLLSIGRIFHKISLSGSVITVTGYRPRHPYPPINVDYRYRFHAPQHETYEISGVNFTTEKLENFNWNHMDLYICTRGDVDYPLMESLKYWRYRMYLLPRENIVSKIASCQRCDIFPDVTADNTREQVEDFVRLIEAVSKLKRQYARKARYLASLLQDSPIAHITKRRHSTSIISRPQPNQGLTNSPFRERVGSNRLPEKRPSINVRPKLENGRIPRIFPATDAAAAAGVAARDDQDDGFPVDIKFSPNATLPEIFEAMKHPVNGVGFFSQTQSLPSCTFVSYDALMWLKTRLNNGRHPLDLLEAMRKERMICHASGDWKKPVVPGFVFYYVVQQDKNAKDYAPPLDDYSAFVNEWLEIEFQGCSFLWHDEPVTTPVPNFLRDSPAPQSWTETSSNKRVYRQSHLEIDVNQKSDRMEWGHVKHHTVLQPRFAFEIVVEWVTSSGPIVADLIGGWMRKANQFNFLVSVPADPMAEPFTKKSDPLRGPIFIPLCTTFLPNGAALFDEFPEESRSDRMLFFQEAILGKFGFLPCVLEKKYSVGKDLPKEYQYVHCTGNMFALIRCATNNYQVESPILKEANVTRCVYGHTNNTNVPKKVGFLWAWNHMIPNKKWKAQTINNSADGELFQLKMLKDFREFCSNSDQRLSTFWTQSQELKRRAQKFEFNNNNTEENKMK.

2 disordered regions span residues 615–649 (QAVP…CENG) and 1037–1072 (RRHS…EKRP). Composition is skewed to polar residues over residues 623–639 (QAGQ…NNNN) and 1041–1057 (TSII…TNSP). The segment covering 1058-1072 (FRERVGSNRLPEKRP) has biased composition (basic and acidic residues).

The protein belongs to the IML1 family. As to quaternary structure, component of the GATOR complex consisting of mio, Nup44A/Seh1, Im11, Nplr3, Nplr2, Wdr24, Wdr59 and Sec13. Within the GATOR complex, probable component of the GATOR1 subcomplex which is likely composed of Iml1, Nplr2 and Nplr3.

An essential component of the GATOR subcomplex GATOR1 which functions as an inhibitor of the amino acid-sensing branch of the TORC1 signaling pathway. The two GATOR subcomplexes, GATOR1 and GATOR2, regulate the TORC1 pathway in order to mediate metabolic homeostasis, female gametogenesis and the response to amino acid limitation and complete starvation. The function of GATOR1 in negatively regulating the TORC1 pathway is essential for maintaining baseline levels of TORC1 activity under nutrient rich conditions, and for promoting survival during amino acid or complete starvation by inhibiting TORC1-dependent cell growth and promoting catabolic metabolism and autophagy. GATOR1 and GATOR2 act at different stages of oogenesis to regulate TORC1 in order to control meiotic entry and promote oocyte growth and development. After exactly four mitotic cyst divisions, the GATOR1 complex members (Iml1, Nprl2 and Nprl3) down-regulate TORC1 to slow cellular metabolism and promote the mitotic/meiotic transition. At later stages of oogenesis, the mio and Nup44A components of the GATOR2 complex inhibit GATOR1 and thus activate TORC1 to promote meiotic progression, and drive oocyte growth and development. The polypeptide is GATOR complex protein Iml1 (Drosophila melanogaster (Fruit fly)).